We begin with the raw amino-acid sequence, 281 residues long: uncharacterized protein (281 aa).

This is an uncharacterized protein from Haloarcula marismortui (strain ATCC 43049 / DSM 3752 / JCM 8966 / VKM B-1809) (Halobacterium marismortui).